Consider the following 89-residue polypeptide: UPF0335 protein Nham_1221 (89 aa).

This sequence belongs to the UPF0335 family.

The chain is UPF0335 protein Nham_1221 from Nitrobacter hamburgensis (strain DSM 10229 / NCIMB 13809 / X14).